A 370-amino-acid polypeptide reads, in one-letter code: tRNA-specific 2-thiouridylase MnmA (370 aa).

Residues Ala-19 to Ser-26 and Leu-45 each bind ATP. Residue Cys-113 is the Nucleophile of the active site. Cys-113 and Cys-209 are disulfide-bonded. Residue Gly-137 coordinates ATP. Positions Arg-159–Gln-161 are interaction with tRNA. The active-site Cysteine persulfide intermediate is Cys-209.

It belongs to the MnmA/TRMU family.

Its subcellular location is the cytoplasm. It carries out the reaction S-sulfanyl-L-cysteinyl-[protein] + uridine(34) in tRNA + AH2 + ATP = 2-thiouridine(34) in tRNA + L-cysteinyl-[protein] + A + AMP + diphosphate + H(+). In terms of biological role, catalyzes the 2-thiolation of uridine at the wobble position (U34) of tRNA, leading to the formation of s(2)U34. This is tRNA-specific 2-thiouridylase MnmA from Zymomonas mobilis subsp. mobilis (strain ATCC 31821 / ZM4 / CP4).